We begin with the raw amino-acid sequence, 339 residues long: MKKRILLLAGGQSEEHEVSLRSARSVLAALPRDQFDVTPVVISPQGRWLPPTDTQRALETGEAVRGGDLVLHRAASAEGYDAVFPLLHGPMGEDGTIQGLLTLAGIPFVGSGVLGSAVSMDKVMTKQVLASVGMPQVAWRLAVRREWQERPQEVRARAGELGYPLFVKPANLGSSVGISKVSGPGELERALDLAFSLGRRVILEAMTAHKPRELEVGILGNDAPIASPVGELRFEADFYDYETKYTEGRATMHIPAPLPPEIAERVRMLALTAFRTLDCAGLARVDFFYVEQTGELFLNEVNTMPGFTTTSMYPKLFEAAGLSYSELVTRLVELALERR.

An ATP-grasp domain is found at 126-333 (KQVLASVGMP…YSELVTRLVE (208 aa)). 158-213 (AGELGYPLFVKPANLGSSVGISKVSGPGELERALDLAFSLGRRVILEAMTAHKPRE) lines the ATP pocket. Residues aspartate 286, glutamate 300, and asparagine 302 each coordinate Mg(2+).

This sequence belongs to the D-alanine--D-alanine ligase family. Requires Mg(2+) as cofactor. Mn(2+) is required as a cofactor.

The protein resides in the cytoplasm. It carries out the reaction 2 D-alanine + ATP = D-alanyl-D-alanine + ADP + phosphate + H(+). Its pathway is cell wall biogenesis; peptidoglycan biosynthesis. Functionally, cell wall formation. The sequence is that of D-alanine--D-alanine ligase from Deinococcus geothermalis (strain DSM 11300 / CIP 105573 / AG-3a).